We begin with the raw amino-acid sequence, 176 residues long: RNA pyrophosphohydrolase (176 aa).

A Nudix hydrolase domain is found at 6–149 (GYRPNVGIIL…KRQVYQQALF (144 aa)). Positions 38–59 (GGIKHGESPEQAMFRELFEEVG) match the Nudix box motif.

Belongs to the Nudix hydrolase family. RppH subfamily. It depends on a divalent metal cation as a cofactor.

Functionally, accelerates the degradation of transcripts by removing pyrophosphate from the 5'-end of triphosphorylated RNA, leading to a more labile monophosphorylated state that can stimulate subsequent ribonuclease cleavage. In Aromatoleum aromaticum (strain DSM 19018 / LMG 30748 / EbN1) (Azoarcus sp. (strain EbN1)), this protein is RNA pyrophosphohydrolase.